Reading from the N-terminus, the 563-residue chain is Arginine--tRNA ligase (563 aa).

The short motif at 120–130 (PNIAKPFHVGH) is the 'HIGH' region element.

Belongs to the class-I aminoacyl-tRNA synthetase family. In terms of assembly, monomer.

The protein localises to the cytoplasm. The catalysed reaction is tRNA(Arg) + L-arginine + ATP = L-arginyl-tRNA(Arg) + AMP + diphosphate. The sequence is that of Arginine--tRNA ligase from Clostridium botulinum (strain Alaska E43 / Type E3).